The primary structure comprises 433 residues: 23S rRNA (uracil(1939)-C(5))-methyltransferase RlmD (433 aa).

One can recognise a TRAM domain in the interval 10 to 68 (RTTTRQIITVSVNDLDSFGQGVARHNGKTLFIPGLLSQENAEVTVTEDKKQYARAKVVR). 4 residues coordinate [4Fe-4S] cluster: Cys81, Cys87, Cys90, and Cys162. S-adenosyl-L-methionine-binding residues include Gln265, Phe294, Asn299, Glu315, Asn342, and Asp363. The active-site Nucleophile is Cys389.

Belongs to the class I-like SAM-binding methyltransferase superfamily. RNA M5U methyltransferase family. RlmD subfamily.

It catalyses the reaction uridine(1939) in 23S rRNA + S-adenosyl-L-methionine = 5-methyluridine(1939) in 23S rRNA + S-adenosyl-L-homocysteine + H(+). Functionally, catalyzes the formation of 5-methyl-uridine at position 1939 (m5U1939) in 23S rRNA. This is 23S rRNA (uracil(1939)-C(5))-methyltransferase RlmD from Shigella dysenteriae serotype 1 (strain Sd197).